Consider the following 76-residue polypeptide: U7-lycotoxin-Ls1c (76 aa).

Residues 1-22 (MKLIIFTGLALFLLVSLIDVEA) form the signal peptide. The propeptide occupies 23-26 (QNEG).

This sequence belongs to the neurotoxin 19 (CSTX) family. 07 (U7-Lctx) subfamily. Post-translationally, contains 4 disulfide bonds. In terms of tissue distribution, expressed by the venom gland.

It localises to the secreted. The sequence is that of U7-lycotoxin-Ls1c from Lycosa singoriensis (Wolf spider).